Reading from the N-terminus, the 638-residue chain is Voltage-gated potassium channel KCNC2 (638 aa).

Over Met-1–Arg-229 the chain is Cytoplasmic. Residues Leu-47 to Ser-75 form a disordered region. Residues Pro-56–Pro-72 show a composition bias toward pro residues. Positions 124, 130, 151, and 152 each coordinate Zn(2+). A helical transmembrane segment spans residues Phe-230–Leu-248. N-linked (GlcNAc...) asparagine glycans are attached at residues Asn-259 and Asn-266. Residues Tyr-284–Phe-303 traverse the membrane as a helical segment. The Cytoplasmic segment spans residues Ser-304–Leu-314. The helical transmembrane segment at Leu-315–Ser-337 threads the bilayer. The chain crosses the membrane as a helical; Voltage-sensor span at residues Phe-346–Leu-368. The Cytoplasmic portion of the chain corresponds to Arg-369–Glu-381. Residues Phe-382–Tyr-401 form a helical membrane-spanning segment. Residues Thr-437, Leu-438, Gly-439, and Tyr-440 each contribute to the K(+) site. The short motif at Thr-437–Asp-442 is the Selectivity filter element. The helical transmembrane segment at Met-451–Val-473 threads the bilayer. The Cytoplasmic portion of the chain corresponds to Asn-474–Leu-638. Positions Ser-538–Gly-572 are disordered. Residue Ser-564 is modified to Phosphoserine; by PKA. The residue at position 600 (Ser-600) is a Phosphoserine.

The protein belongs to the potassium channel family. C (Shaw) (TC 1.A.1.2) subfamily. Kv3.2/KCNC2 sub-subfamily. In terms of assembly, homotetramer and heterotetramer with other channel-forming alpha subunits, such as KCNC1. Interacts with KCNC1. Homotetramer or heterotetramer channel activity is regulated by association with modulating ancillary subunits such as KCNE1, KCNE2 and KCNE3, creating a functionally diverse range of channel complexes. Interacts with KCNE1, KCNE2 and KCNE3. Post-translationally, phosphorylated by PKA in cortical synaptosomes. cAMP-dependent phosphorylation inhibits channel activity. Histamine H2 receptor- and PKA-induced phosphorylation extends action potential spike duration, reduces action potential spike amplitude, sustains maximum firing frequency in hippocampal interneurons; also reduces the incidence of high-frequency oscillations in hippocampal CA3 pyramidal cell layers. In terms of tissue distribution, expressed in neurons of the visual cortex during postnatal development. Expressed in neurons of the globus pallidus at postnatal age day 7 (P7), onward. Expressed in thalamic relay neurons. Expressed in neurons in layer IV and deeper cortical layers of the neocortex. Expressed in hippocampal interneurons. Expressed in nonpyramidal interneurons in the basolateral amygdala. Expressed in retinal ganglion cells (at protein level). Widely expressed in the brain. Expressed in numerous thalamic relay neurons throughout the dorsal thalamus. Expressed in interneurons of the deep layers V-VI of the cerebral cortex, the CA1 and CA3 pyramidal and dentate gyrus (DG) granule cells of the hippocampus, in neurons of the caudate-putamen, globus pallidus and subthalamic nucleus. Also expressed in the optic layer of interior colliculus, the inferior colliculus, the red nucleus, the medial geniculate, the ventral lateral lemiscus, the reticulotegmental nucleus and in the deep cerebellar nuclei. Expressed in globus pallidus (GP) neurons.

Its subcellular location is the cell membrane. It localises to the membrane. The protein localises to the perikaryon. The protein resides in the cell projection. It is found in the axon. Its subcellular location is the synapse. It localises to the synaptosome. The protein localises to the dendrite. The protein resides in the postsynaptic cell membrane. It is found in the presynaptic cell membrane. Its subcellular location is the apical cell membrane. It localises to the basolateral cell membrane. The catalysed reaction is K(+)(in) = K(+)(out). Inhibited by Stichodactyla helianthus peptide ShK. Inhibited by millimolar levels of tetraethylammonium (TEA). Contrary to other channels, inhibited only by millimolar levels of 4-aminopyridine (4-AP). In terms of biological role, voltage-gated potassium channel that mediates transmembrane potassium transport in excitable membranes, primarily in the brain. Contributes to the regulation of the fast action potential repolarization and in sustained high-frequency firing in neurons of the central nervous system. Homotetramer channels mediate delayed-rectifier voltage-dependent potassium currents that activate rapidly at high-threshold voltages and inactivate slowly. Forms tetrameric channels through which potassium ions pass in accordance with their electrochemical gradient. The channel alternates between opened and closed conformations in response to the voltage difference across the membrane. Can form functional homotetrameric channels and heterotetrameric channels that contain variable proportions of KCNC1, and possibly other family members as well; channel properties depend on the type of alpha subunits that are part of the channel. Channel properties may be modulated either by the association with ancillary subunits, such as KCNE1, KCNE2 and KCNE3 or indirectly by nitric oxide (NO) through a cGMP- and PKG-mediated signaling cascade, slowing channel activation and deactivation of delayed rectifier potassium channels. Contributes to fire sustained trains of very brief action potentials at high frequency in retinal ganglion cells, thalamocortical and suprachiasmatic nucleus (SCN) neurons and in hippocampal and neocortical interneurons. Sustained maximal action potential firing frequency in inhibitory hippocampal interneurons is negatively modulated by histamine H2 receptor activation in a cAMP- and protein kinase (PKA) phosphorylation-dependent manner. Plays a role in maintaining the fidelity of synaptic transmission in neocortical GABAergic interneurons by generating action potential (AP) repolarization at nerve terminals, thus reducing spike-evoked calcium influx and GABA neurotransmitter release. Required for long-range synchronization of gamma oscillations over distance in the neocortex. Contributes to the modulation of the circadian rhythm of spontaneous action potential firing in suprachiasmatic nucleus (SCN) neurons in a light-dependent manner. This Rattus norvegicus (Rat) protein is Voltage-gated potassium channel KCNC2.